The chain runs to 441 residues: Cortexillin-2 (441 aa).

Residues 1 to 229 are actin-binding; the sequence is MDLNKEWEKV…VLYTSLFFHA (229 aa). Calponin-homology (CH) domains follow at residues 9–117 and 126–231; these read KVQE…RKYR and KSSE…HAFR. Coiled coils occupy residues 229 to 362 and 406 to 430; these read AFRA…RLGL and SFEEQAKKLASKLESENILIEKYLN.

This sequence belongs to the cortexillin family. As to quaternary structure, homodimer; parallel.

It localises to the cytoplasm. The protein localises to the cytoskeleton. In terms of biological role, actin-bundling protein. When linked to F-actin the actin filaments form preferentially anti-parallel bundles that associate into meshworks. Plays a major role in cytokinesis. Negatively regulates cortical localization of rapgap1. This Dictyostelium discoideum (Social amoeba) protein is Cortexillin-2 (ctxB).